The sequence spans 121 residues: Surface glycoprotein CD59 homolog (121 aa).

Positions 1 to 19 (MYILFTLVLTFVFCKPIHS) are cleaved as a signal peptide. Residues 20 to 104 (LQCYNCSHST…ENIKRTISDK (85 aa)) form the UPAR/Ly6 domain. 5 disulfide bridges follow: Cys22-Cys45, Cys25-Cys32, Cys38-Cys58, Cys64-Cys82, and Cys83-Cys88. Asn24 carries N-linked (GlcNAc...) asparagine; by host glycosylation. A lipid anchor (GPI-anchor amidated asparagine; by host) is attached at Asn96. A propeptide spans 97 to 121 (IKRTISDKALLLLALFLVTAWNFPL) (removed in mature form).

The protein resides in the host cell membrane. The chain is Surface glycoprotein CD59 homolog (15) from Saimiriine herpesvirus 2 (strain 11) (SaHV-2).